The following is a 191-amino-acid chain: Molybdenum cofactor guanylyltransferase (191 aa).

Residues 11 to 13 (LCG), K23, D66, and D97 contribute to the GTP site. A Mg(2+)-binding site is contributed by D97.

Belongs to the MobA family. In terms of assembly, monomer. Requires Mg(2+) as cofactor.

The protein localises to the cytoplasm. It catalyses the reaction Mo-molybdopterin + GTP + H(+) = Mo-molybdopterin guanine dinucleotide + diphosphate. Its function is as follows. Transfers a GMP moiety from GTP to Mo-molybdopterin (Mo-MPT) cofactor (Moco or molybdenum cofactor) to form Mo-molybdopterin guanine dinucleotide (Mo-MGD) cofactor. The protein is Molybdenum cofactor guanylyltransferase of Campylobacter jejuni subsp. jejuni serotype O:6 (strain 81116 / NCTC 11828).